The sequence spans 161 residues: Protein-export protein SecB (161 aa).

This sequence belongs to the SecB family. In terms of assembly, homotetramer, a dimer of dimers. One homotetramer interacts with 1 SecA dimer.

Its subcellular location is the cytoplasm. In terms of biological role, one of the proteins required for the normal export of preproteins out of the cell cytoplasm. It is a molecular chaperone that binds to a subset of precursor proteins, maintaining them in a translocation-competent state. It also specifically binds to its receptor SecA. This chain is Protein-export protein SecB, found in Shewanella baltica (strain OS155 / ATCC BAA-1091).